The following is a 352-amino-acid chain: Protein RecA (352 aa).

67-74 (GPESSGKT) is a binding site for ATP. The disordered stretch occupies residues 330–352 (STPKPEAESQEKAAAAQDDDSLV).

Belongs to the RecA family.

It localises to the cytoplasm. Its function is as follows. Can catalyze the hydrolysis of ATP in the presence of single-stranded DNA, the ATP-dependent uptake of single-stranded DNA by duplex DNA, and the ATP-dependent hybridization of homologous single-stranded DNAs. It interacts with LexA causing its activation and leading to its autocatalytic cleavage. The chain is Protein RecA from Chromohalobacter salexigens (strain ATCC BAA-138 / DSM 3043 / CIP 106854 / NCIMB 13768 / 1H11).